We begin with the raw amino-acid sequence, 377 residues long: Alanine racemase (377 aa).

Catalysis depends on Lys33, which acts as the Proton acceptor; specific for D-alanine. At Lys33 the chain carries N6-(pyridoxal phosphate)lysine. Arg134 provides a ligand contact to substrate. Tyr267 functions as the Proton acceptor; specific for L-alanine in the catalytic mechanism. Met315 lines the substrate pocket.

This sequence belongs to the alanine racemase family. Pyridoxal 5'-phosphate is required as a cofactor.

It carries out the reaction L-alanine = D-alanine. It functions in the pathway amino-acid biosynthesis; D-alanine biosynthesis; D-alanine from L-alanine: step 1/1. Catalyzes the interconversion of L-alanine and D-alanine. May also act on other amino acids. The polypeptide is Alanine racemase (alr) (Treponema pallidum subsp. pallidum (strain SS14)).